Reading from the N-terminus, the 149-residue chain is Large ribosomal subunit protein uL15 (149 aa).

Basic and acidic residues predominate over residues 1–28 (MVIKIHDLRPAPGSKRDKIRVGRGEGSK). The tract at residues 1-54 (MVIKIHDLRPAPGSKRDKIRVGRGEGSKGKTAGRGTKGTKARKNVSPRFEGGQM) is disordered.

The protein belongs to the universal ribosomal protein uL15 family. As to quaternary structure, part of the 50S ribosomal subunit.

Its function is as follows. Binds to the 23S rRNA. The sequence is that of Large ribosomal subunit protein uL15 from Saccharopolyspora erythraea (strain ATCC 11635 / DSM 40517 / JCM 4748 / NBRC 13426 / NCIMB 8594 / NRRL 2338).